A 535-amino-acid chain; its full sequence is MSLKLNIQRWLFSTNAKDIAVLYFIFALFSAMIGTGLSAIIRLELANTGSPFLHGNTQAFNVVITAHAILMIFFFVMPALVGGFGNYLMPLMLGASDMAFARLNNISFWLLVPSLILILTSALVEAGAGTGWTVYFPLAGIQSHSGPAVDLAIFSLHLSGFSSLLGAINFITTFINMRTIGMKYENVPLFAWAVLFTAILLLLSLPVLAAGLTMGIFDRNFNTSFFEYAGGGDAVLYQHLFYWWNHPEVYILIIPGFGIISHAVSAIASKPVFGVQGMIYAMWSIGLLGFCVWSHHMFAVGLDSDTRAYFTSATMVIAVPTSIKIFSWLATLYGGTIRLNVTALFALGFIFLFTIGGLTGVVLANSALDIPFHDSYYVVAHFHYVLSMGAVFSIFCGWYLWSPKILGLHYNERLSHIHFWLMFIGVNVTFFPMHFLGLQGMPRRINDYPDAFIGWNQVASLGSIISIVASIVFIYVVYDQLTNGLHQGNKALDSQFKPSFMGTNLNVEGYTGPTLEWTVSTPPSLHAFNTPAVLY.

The chain crosses the membrane as a helical span at residues V21–L43. Residues E44 and G49 each coordinate Ca(2+). 6 helical membrane passes run V63 to G85, I106 to A128, I153 to I175, P188 to A210, Y242 to V264, and P271 to W293. H67 is a binding site for Fe(II)-heme a. H246 provides a ligand contact to Cu cation. The 1'-histidyl-3'-tyrosine (His-Tyr) cross-link spans H246 to Y250. Residue Y250 coordinates O2. Cu cation is bound by residues H295 and H296. 2 helical membrane-spanning segments follow: residues A308–A330 and T342–A364. Residues H373 and D374 each coordinate Mg(2+). Transmembrane regions (helical) follow at residues V379–W401, L414–L436, and N456–Y478. Position 381 (H381) interacts with heme a3. Fe(II)-heme a is bound at residue H383.

Belongs to the heme-copper respiratory oxidase family. In terms of assembly, component of the cytochrome c oxidase (complex IV, CIV), a multisubunit enzyme composed of a catalytic core of 3 subunits and several supernumerary subunits. The complex exists as a monomer or a dimer and forms supercomplexes (SCs) in the inner mitochondrial membrane with ubiquinol-cytochrome c oxidoreductase (cytochrome b-c1 complex, complex III, CIII). The cofactor is heme. Cu cation is required as a cofactor.

It is found in the mitochondrion inner membrane. It carries out the reaction 4 Fe(II)-[cytochrome c] + O2 + 8 H(+)(in) = 4 Fe(III)-[cytochrome c] + 2 H2O + 4 H(+)(out). The protein operates within energy metabolism; oxidative phosphorylation. Component of the cytochrome c oxidase, the last enzyme in the mitochondrial electron transport chain which drives oxidative phosphorylation. The respiratory chain contains 3 multisubunit complexes succinate dehydrogenase (complex II, CII), ubiquinol-cytochrome c oxidoreductase (cytochrome b-c1 complex, complex III, CIII) and cytochrome c oxidase (complex IV, CIV), that cooperate to transfer electrons derived from NADH and succinate to molecular oxygen, creating an electrochemical gradient over the inner membrane that drives transmembrane transport and the ATP synthase. Cytochrome c oxidase is the component of the respiratory chain that catalyzes the reduction of oxygen to water. Electrons originating from reduced cytochrome c in the intermembrane space (IMS) are transferred via the dinuclear copper A center (CU(A)) of subunit 2 and heme A of subunit 1 to the active site in subunit 1, a binuclear center (BNC) formed by heme A3 and copper B (CU(B)). The BNC reduces molecular oxygen to 2 water molecules using 4 electrons from cytochrome c in the IMS and 4 protons from the mitochondrial matrix. This is Cytochrome c oxidase subunit 1 (COX1) from Yarrowia lipolytica (strain CLIB 122 / E 150) (Yeast).